We begin with the raw amino-acid sequence, 720 residues long: DNA gyrase subunit B (720 aa).

Positions 1–26 (MVDAMPENPAEEPTAASAAPNPEAVP) are enriched in low complexity. Residues 1-42 (MVDAMPENPAEEPTAASAAPNPEAVPDAVGQPEAPVKDRKVP) form a disordered region. One can recognise a Toprim domain in the interval 498–612 (CEVYIVEGDS…AGHVFLAQPP (115 aa)). Mg(2+) is bound by residues Glu504, Asp577, and Asp579.

It belongs to the type II topoisomerase GyrB family. In terms of assembly, heterotetramer, composed of two GyrA and two GyrB chains. In the heterotetramer, GyrA contains the active site tyrosine that forms a transient covalent intermediate with the DNA, while GyrB binds cofactors and catalyzes ATP hydrolysis. Mg(2+) serves as cofactor. The cofactor is Mn(2+). It depends on Ca(2+) as a cofactor.

The protein resides in the cytoplasm. It catalyses the reaction ATP-dependent breakage, passage and rejoining of double-stranded DNA.. Its activity is regulated as follows. Supercoiling activity inhibited by novobiocin and coumermycin, DNA wrapping around gyrase is not inhibited. In terms of biological role, a type II topoisomerase that negatively supercoils DNA in an ATP-dependent manner. About 140 bp of DNA wraps around gyrase in the presence or absence of ATP, when ATP is added negative supercoils are made. Its function is as follows. A type II topoisomerase that negatively supercoils closed circular double-stranded (ds) DNA in an ATP-dependent manner to modulate DNA topology and maintain chromosomes in an underwound state. Negative supercoiling favors strand separation, and DNA replication, transcription, recombination and repair, all of which involve strand separation. Also able to catalyze the interconversion of other topological isomers of dsDNA rings, including catenanes and knotted rings. Type II topoisomerases break and join 2 DNA strands simultaneously in an ATP-dependent manner. This Micrococcus luteus (strain ATCC 4698 / DSM 20030 / JCM 1464 / CCM 169 / CCUG 5858 / IAM 1056 / NBRC 3333 / NCIMB 9278 / NCTC 2665 / VKM Ac-2230) (Micrococcus lysodeikticus) protein is DNA gyrase subunit B.